We begin with the raw amino-acid sequence, 355 residues long: C-C chemokine receptor type 1 (355 aa).

Residues 1-34 (METPNTTEDYDTTTEFDYGDATPCQKVNERAFGA) are Extracellular-facing. Residue Asn-5 is glycosylated (N-linked (GlcNAc...) asparagine). 2 cysteine pairs are disulfide-bonded: Cys-24–Cys-273 and Cys-106–Cys-183. A helical transmembrane segment spans residues 35 to 60 (QLLPPLYSLVFVIGLVGNILVVLVLV). Over 61–64 (QYKR) the chain is Cytoplasmic. Residues 65–91 (LKNMTSIYLLNLAISDLLFLFTLPFWI) traverse the membrane as a helical segment. Residues 92–107 (DYKLKDDWVFGDAMCK) are Extracellular-facing. The chain crosses the membrane as a helical span at residues 108–129 (ILSGFYYTGLYSEIFFIILLTI). Residues 130–146 (DRYLAIVHAVFALRART) lie on the Cytoplasmic side of the membrane. The helical transmembrane segment at 147–171 (VTFGVITSIIIWALAILASMPGLYF) threads the bilayer. At 172–197 (SKTQWEFTHHTCSLHFPHESLREWKL) the chain is on the extracellular side. A helical membrane pass occupies residues 198–223 (FQALKLNLFGLVLPLLVMIICYTGII). At 224–239 (KILLRRPNEKKSKAVR) the chain is on the cytoplasmic side. A helical transmembrane segment spans residues 240–264 (LIFVIMIIFFLFWTPYNLTILISVF). Residues 265-281 (QDFLFTHECEQSRHLDL) lie on the Extracellular side of the membrane. Residues 282-305 (AVQVTEVIAYTHCCVNPVIYAFVG) traverse the membrane as a helical segment. Topologically, residues 306–355 (ERFRKYLRQLFHRRVAVHLVKWLPFLSVDRLERVSSTSPSTGEHELSAGF) are cytoplasmic.

The protein belongs to the G-protein coupled receptor 1 family. Interacts with CREB3. Interacts with CCL3. Interacts with CCL15. Interacts with CCL23. Interacts with GNAI1. Interacts with PF4/CXCL4. Widely expressed in different hematopoietic cells.

Its subcellular location is the cell membrane. Its function is as follows. Chemokine receptor that plays a crucial role in regulating immune cell migration, inflammation, and immune responses. Contributes to the inflammatory response by recruiting immune cells, such as monocytes, macrophages, T-cells, and dendritic cells, to sites of inflammation for the clearance of pathogens and the resolution of tissue damage. When activated by its ligands including CCL3, CCL5-9, CCL13-16 and CCL23, triggers a signaling cascade within immune cells, leading to their migration towards the source of the chemokine. For example, mediates neutrophil migration after activation by CCL3 leading to the sequential release of TNF-alpha and leukotriene B4. Also mediates monocyte migration upon CXCL4 binding. Activation by CCL5 results in neuroinflammation through the ERK1/2 signaling pathway. The polypeptide is C-C chemokine receptor type 1 (CCR1) (Homo sapiens (Human)).